A 257-amino-acid polypeptide reads, in one-letter code: Pyridoxine 5'-phosphate synthase (257 aa).

Asn16 contacts 3-amino-2-oxopropyl phosphate. A 1-deoxy-D-xylulose 5-phosphate-binding site is contributed by 18 to 19; sequence DH. Arg27 serves as a coordination point for 3-amino-2-oxopropyl phosphate. The active-site Proton acceptor is the His52. Positions 54 and 59 each coordinate 1-deoxy-D-xylulose 5-phosphate. Residue Glu79 is the Proton acceptor of the active site. Thr109 is a binding site for 1-deoxy-D-xylulose 5-phosphate. His200 functions as the Proton donor in the catalytic mechanism. Residues Gly201 and 222-223 each bind 3-amino-2-oxopropyl phosphate; that span reads GH.

This sequence belongs to the PNP synthase family. As to quaternary structure, homooctamer; tetramer of dimers.

The protein localises to the cytoplasm. The enzyme catalyses 3-amino-2-oxopropyl phosphate + 1-deoxy-D-xylulose 5-phosphate = pyridoxine 5'-phosphate + phosphate + 2 H2O + H(+). Its pathway is cofactor biosynthesis; pyridoxine 5'-phosphate biosynthesis; pyridoxine 5'-phosphate from D-erythrose 4-phosphate: step 5/5. Its function is as follows. Catalyzes the complicated ring closure reaction between the two acyclic compounds 1-deoxy-D-xylulose-5-phosphate (DXP) and 3-amino-2-oxopropyl phosphate (1-amino-acetone-3-phosphate or AAP) to form pyridoxine 5'-phosphate (PNP) and inorganic phosphate. The polypeptide is Pyridoxine 5'-phosphate synthase (Burkholderia pseudomallei (strain K96243)).